Consider the following 427-residue polypeptide: ETS domain-containing protein Elk-1 (427 aa).

A DNA-binding region (ETS) is located at residues 5–86; sequence VTLWQFLLQL…SGQKFVYKFV (82 aa). Disordered stretches follow at residues 116–146, 166–202, and 226–252; these read ATVH…GLAR, LQPQ…SPNP, and PNQK…VEGP. Residues Lys-229, Lys-248, and Lys-253 each participate in a glycyl lysine isopeptide (Lys-Gly) (interchain with G-Cter in SUMO) cross-link. Over residues 300–310 the composition is skewed to polar residues; sequence STSTTEITQPQ. The interval 300–350 is disordered; it reads STSTTEITQPQKGRKPRDLELPLSPSLLGGQGPERTPGSGTSSGLQAQGPA. Ser-323 is subject to Phosphoserine; by MAPK1. Phosphothreonine; by MAPK1 occurs at positions 335, 352, 362, and 367. Residues 348-398 form a sufficient for interaction with MAD2L2 region; that stretch reads GPALTPSLLPTHTLTPVLLTPSSLPPSIHFWSTLSPIAPRSPAKLSFQFPS. The O-linked (GlcNAc) threonine glycan is linked to Thr-380. Ser-382 is modified (phosphoserine; by MAPK1 and MAPK8). Residue Ser-388 is modified to Phosphoserine; by MAPK1. Phosphothreonine; by MAPK1 is present on Thr-416. A Phosphoserine; by MAPK1 modification is found at Ser-421.

This sequence belongs to the ETS family. Interacts in its sumoylated form with PIAS2/PIASX which enhances its transcriptional activator activity. Interacts with MAD2L2; the interaction is direct and promotes phosphorylation by the kinases MAPK8 and/or MAPK9. Interacts with POU1F1. In terms of processing, sumoylation represses transcriptional activator activity as it results in recruitment of HDAC2 to target gene promoters which leads to decreased histone acetylation and reduced transactivator activity. It also regulates nuclear retention. On mitogenic stimulation, phosphorylated on C-terminal serine and threonine residues by MAPK1. Ser-382 and Ser-388 are the preferred sites for MAPK1. In vitro, phosphorylation by MAPK1 potentiates ternary complex formation with the serum responses factors, SRE and SRF. Also phosphorylated on Ser-382 by MAPK8 and/or MAKP9. Phosphorylation leads to loss of sumoylation and restores transcriptional activator activity. Phosphorylated and activated by CAMK4, MAPK11, MAPK12 and MAPK14. Upon bFGF stimulus, phosphorylated by PAK1. Phosphorylated by PRP4K at Thr-416; phosphorylation activation ELK1 transcriptional activity.

The protein resides in the nucleus. In terms of biological role, transcription factor that binds to purine-rich DNA sequences. Forms a ternary complex with SRF and the ETS and SRF motifs of the serum response element (SRE) on the promoter region of immediate early genes such as FOS and IER2. Induces target gene transcription upon JNK and MAPK-signaling pathways stimulation. The protein is ETS domain-containing protein Elk-1 of Rattus norvegicus (Rat).